Consider the following 261-residue polypeptide: MPQNEYIEQHIKQHGRRLDYEERKRKKAAREGHRIAKDAQELKGWRGKQFAKKRYSEKVAMKKKIKTHQESKVKGPATPKEDDGEALPTYLLDRQTNNSAKAISSSIKQKRLEKADKFAVPLPRVKGISEEEMFKVIKTGKQKSKAWKRMITKHTFVGEGFTRRPVKMERIIRPSALRQKKANVTHPELAVTVFLPILGVKKNPQSPMYTQLGVLTKGTIIEVNVSELGLVTAGGKVVWGKYAQITNEPDRDGCVNAVLLV.

Residues 1–34 form a disordered region; sequence MPQNEYIEQHIKQHGRRLDYEERKRKKAAREGHR. The span at 7–34 shows a compositional bias: basic and acidic residues; sequence IEQHIKQHGRRLDYEERKRKKAAREGHR. 2 consecutive short sequence motifs (nuclear localization signal) follow at residues 15-22 and 51-58; these read GRRLDYEE and AKKRYSEK. The disordered stretch occupies residues 61–85; sequence MKKKIKTHQESKVKGPATPKEDDGE.

This sequence belongs to the eukaryotic ribosomal protein eS8 family. Ribosome biogenesis protein NSA2 subfamily. In terms of assembly, component of the pre-66S ribosomal particle. Interacts with NOP7 and RRP1. Interacts with RSA4 (via WD repeats).

Its subcellular location is the nucleus. It is found in the nucleolus. Its function is as follows. Involved in the biogenesis of the 60S ribosomal subunit. May play a part in the quality control of pre-60S particles. The protein is Ribosome biogenesis protein NSA2 (NSA2) of Debaryomyces hansenii (strain ATCC 36239 / CBS 767 / BCRC 21394 / JCM 1990 / NBRC 0083 / IGC 2968) (Yeast).